The primary structure comprises 425 residues: tRNA(Ile)-lysidine synthase (425 aa).

Residue S27 to S32 participates in ATP binding.

It belongs to the tRNA(Ile)-lysidine synthase family.

The protein localises to the cytoplasm. It carries out the reaction cytidine(34) in tRNA(Ile2) + L-lysine + ATP = lysidine(34) in tRNA(Ile2) + AMP + diphosphate + H(+). Functionally, ligates lysine onto the cytidine present at position 34 of the AUA codon-specific tRNA(Ile) that contains the anticodon CAU, in an ATP-dependent manner. Cytidine is converted to lysidine, thus changing the amino acid specificity of the tRNA from methionine to isoleucine. The polypeptide is tRNA(Ile)-lysidine synthase (Streptococcus sanguinis (strain SK36)).